A 557-amino-acid polypeptide reads, in one-letter code: CTP synthase (557 aa).

The segment at methionine 1–leucine 267 is amidoligase domain. Serine 13 lines the CTP pocket. UTP is bound at residue serine 13. Serine 14 to isoleucine 19 is a binding site for ATP. Position 54 (tyrosine 54) interacts with L-glutamine. ATP is bound at residue aspartate 71. Mg(2+) is bound by residues aspartate 71 and glutamate 141. CTP-binding positions include aspartate 148–glutamate 150, lysine 188–glutamine 193, and lysine 224. UTP-binding positions include lysine 188–glutamine 193 and lysine 224. Residues alanine 292–glutamate 535 enclose the Glutamine amidotransferase type-1 domain. Residue glycine 354 participates in L-glutamine binding. Cysteine 381 acts as the Nucleophile; for glutamine hydrolysis in catalysis. L-glutamine-binding positions include leucine 382 to glutamine 385, glutamate 406, and arginine 463. Residues histidine 508 and glutamate 510 contribute to the active site. Positions glycine 536–arginine 557 are disordered.

This sequence belongs to the CTP synthase family. In terms of assembly, homotetramer.

It catalyses the reaction UTP + L-glutamine + ATP + H2O = CTP + L-glutamate + ADP + phosphate + 2 H(+). The catalysed reaction is L-glutamine + H2O = L-glutamate + NH4(+). The enzyme catalyses UTP + NH4(+) + ATP = CTP + ADP + phosphate + 2 H(+). Its pathway is pyrimidine metabolism; CTP biosynthesis via de novo pathway; CTP from UDP: step 2/2. Allosterically activated by GTP, when glutamine is the substrate; GTP has no effect on the reaction when ammonia is the substrate. The allosteric effector GTP functions by stabilizing the protein conformation that binds the tetrahedral intermediate(s) formed during glutamine hydrolysis. Inhibited by the product CTP, via allosteric rather than competitive inhibition. Its function is as follows. Catalyzes the ATP-dependent amination of UTP to CTP with either L-glutamine or ammonia as the source of nitrogen. Regulates intracellular CTP levels through interactions with the four ribonucleotide triphosphates. In Roseiflexus sp. (strain RS-1), this protein is CTP synthase.